A 269-amino-acid chain; its full sequence is Cell wall protein TIR3 (269 aa).

A signal peptide spans methionine 1–alanine 22. Residues serine 128–lysine 242 are disordered. The N-linked (GlcNAc...) asparagine glycan is linked to asparagine 234. The GPI-anchor amidated glycine moiety is linked to residue glycine 245. Positions alanine 246–leucine 269 are cleaved as a propeptide — removed in mature form.

It belongs to the SRP1/TIP1 family. In terms of processing, extensively O-glycosylated. The GPI-anchor is attached to the protein in the endoplasmic reticulum and serves to target the protein to the cell surface. There, the glucosamine-inositol phospholipid moiety is cleaved off and the GPI-modified mannoprotein is covalently attached via its lipidless GPI glycan remnant to the 1,6-beta-glucan of the outer cell wall layer.

The protein resides in the secreted. It is found in the cell wall. It localises to the membrane. Component of the cell wall. Required for anaerobic growth. The sequence is that of Cell wall protein TIR3 (TIR3) from Saccharomyces cerevisiae (strain ATCC 204508 / S288c) (Baker's yeast).